The sequence spans 602 residues: Elongation factor 4 (602 aa).

In terms of domain architecture, tr-type G spans 2 to 184 (KHIRNFSIIA…AIVAKVPAPR (183 aa)). GTP is bound by residues 14–19 (DHGKST) and 131–134 (NKMD).

It belongs to the TRAFAC class translation factor GTPase superfamily. Classic translation factor GTPase family. LepA subfamily.

Its subcellular location is the cell inner membrane. The catalysed reaction is GTP + H2O = GDP + phosphate + H(+). In terms of biological role, required for accurate and efficient protein synthesis under certain stress conditions. May act as a fidelity factor of the translation reaction, by catalyzing a one-codon backward translocation of tRNAs on improperly translocated ribosomes. Back-translocation proceeds from a post-translocation (POST) complex to a pre-translocation (PRE) complex, thus giving elongation factor G a second chance to translocate the tRNAs correctly. Binds to ribosomes in a GTP-dependent manner. The protein is Elongation factor 4 of Verminephrobacter eiseniae (strain EF01-2).